The following is a 239-amino-acid chain: Acyl-protein thioesterase 1 (239 aa).

Catalysis depends on charge relay system residues Ser-124, Asp-180, and His-213.

Belongs to the AB hydrolase superfamily. AB hydrolase 2 family.

It localises to the cytoplasm. It is found in the nucleus. The catalysed reaction is S-hexadecanoyl-L-cysteinyl-[protein] + H2O = L-cysteinyl-[protein] + hexadecanoate + H(+). Functionally, hydrolyzes fatty acids from S-acylated cysteine residues in proteins with a strong preference for palmitoylated G-alpha proteins over other acyl substrates. Mediates the deacylation of G-alpha proteins such as GPA1 in vivo, but has weak or no activity toward palmitoylated Ras proteins. Has weak lysophospholipase activity in vitro; however such activity may not exist in vivo. In Emericella nidulans (strain FGSC A4 / ATCC 38163 / CBS 112.46 / NRRL 194 / M139) (Aspergillus nidulans), this protein is Acyl-protein thioesterase 1.